Here is a 229-residue protein sequence, read N- to C-terminus: Potassium/proton antiporter CemA (229 aa).

4 helical membrane passes run 7–27, 114–134, 154–174, and 189–209; these read FTPL…SLSF, LICF…LLIL, ILLL…ELMI, and IISG…KYWI.

This sequence belongs to the CemA family.

The protein resides in the plastid. Its subcellular location is the chloroplast inner membrane. The enzyme catalyses K(+)(in) + H(+)(out) = K(+)(out) + H(+)(in). Contributes to K(+)/H(+) antiport activity by supporting proton efflux to control proton extrusion and homeostasis in chloroplasts in a light-dependent manner to modulate photosynthesis. Prevents excessive induction of non-photochemical quenching (NPQ) under continuous-light conditions. Indirectly promotes efficient inorganic carbon uptake into chloroplasts. In Gossypium hirsutum (Upland cotton), this protein is Potassium/proton antiporter CemA.